Consider the following 338-residue polypeptide: RNA 3'-terminal phosphate cyclase (338 aa).

ATP-binding positions include Q103 and 283–287 (YLADQ). The Tele-AMP-histidine intermediate role is filled by H308.

This sequence belongs to the RNA 3'-terminal cyclase family. Type 1 subfamily.

It is found in the cytoplasm. The enzyme catalyses a 3'-end 3'-phospho-ribonucleotide-RNA + ATP = a 3'-end 2',3'-cyclophospho-ribonucleotide-RNA + AMP + diphosphate. Catalyzes the conversion of 3'-phosphate to a 2',3'-cyclic phosphodiester at the end of RNA. The mechanism of action of the enzyme occurs in 3 steps: (A) adenylation of the enzyme by ATP; (B) transfer of adenylate to an RNA-N3'P to produce RNA-N3'PP5'A; (C) and attack of the adjacent 2'-hydroxyl on the 3'-phosphorus in the diester linkage to produce the cyclic end product. The biological role of this enzyme is unknown but it is likely to function in some aspects of cellular RNA processing. This chain is RNA 3'-terminal phosphate cyclase, found in Escherichia coli O127:H6 (strain E2348/69 / EPEC).